The chain runs to 269 residues: 5'-nucleotidase SurE (269 aa).

A divalent metal cation contacts are provided by aspartate 11, aspartate 12, serine 43, and asparagine 101.

This sequence belongs to the SurE nucleotidase family. A divalent metal cation serves as cofactor.

Its subcellular location is the cytoplasm. It carries out the reaction a ribonucleoside 5'-phosphate + H2O = a ribonucleoside + phosphate. Its function is as follows. Nucleotidase that shows phosphatase activity on nucleoside 5'-monophosphates. This is 5'-nucleotidase SurE from Synechococcus sp. (strain CC9902).